We begin with the raw amino-acid sequence, 576 residues long: Cilia- and flagella-associated protein 100 (576 aa).

The tract at residues 1 to 29 is disordered; the sequence is MPIYDEASVPGTAAGRSTTDVGATAGANP. 3 coiled-coil regions span residues 125–226, 254–311, and 342–408; these read IFLL…CRRY, VAEW…IMKE, and YKQL…LKDR. Disordered regions lie at residues 417–439, 495–519, and 538–563; these read TLSM…PGGP, AEKA…HREH, and TGKP…RNDE.

It belongs to the CFAP100 family. Interacts with FAP73; form the modifier of inner arm (MIA) complex.

Its subcellular location is the cytoplasm. It localises to the cytoskeleton. The protein localises to the flagellum axoneme. As part of MIA, a complex associated with the outer doublet microtubules of the axoneme, may play a role in ciliary/flagellar motility by regulating the assembly and the activity of axonemal inner dynein arm. The polypeptide is Cilia- and flagella-associated protein 100 (Chlamydomonas reinhardtii (Chlamydomonas smithii)).